A 361-amino-acid polypeptide reads, in one-letter code: MKNLFLYCRAGYEKDCAAEIQQRAAELGIGGFVKANRDDAYVVFQGFSPDDGDRLAKELPLDSLIFARQMFACGDLLDDFSPEDRVTPIAESLTEVERAGELRVETPDTNEAKELSAFCRKFTVPLRQALKKRGVLLDKESSRRPIVHVCFVAPNKAFTGYSLSNNSSPHFMGIPRLKFPADAPSRSTLKLDEAFIHFIPREEHETRLRSGLNAVDLGACPGGWTYQLVRRGMMVHAIDNGPMNHDLMETGQVTHHRADGFKFEPARRNIYWLVCDMVEKPARVAELMEYWAIQGWFKEAIFNLKLPMKSRYKEVSQILANMHAILKENGIHEFHLACKHLYHDRDEVTVHLWLRPSSPWI.

Residues serine 187, 220-223 (CPGG), aspartate 239, aspartate 259, and aspartate 276 contribute to the S-adenosyl-L-methionine site. Catalysis depends on lysine 305, which acts as the Proton acceptor.

This sequence belongs to the class I-like SAM-binding methyltransferase superfamily. RNA methyltransferase RlmE family. RlmM subfamily. Monomer.

It localises to the cytoplasm. It carries out the reaction cytidine(2498) in 23S rRNA + S-adenosyl-L-methionine = 2'-O-methylcytidine(2498) in 23S rRNA + S-adenosyl-L-homocysteine + H(+). In terms of biological role, catalyzes the 2'-O-methylation at nucleotide C2498 in 23S rRNA. The sequence is that of Ribosomal RNA large subunit methyltransferase M from Shewanella amazonensis (strain ATCC BAA-1098 / SB2B).